Reading from the N-terminus, the 741-residue chain is Alpha-1,6-mannosylglycoprotein 6-beta-N-acetylglucosaminyltransferase A (741 aa).

Topologically, residues 1 to 13 (MALFTPWKLSSQK) are cytoplasmic. The helical; Signal-anchor for type II membrane protein transmembrane segment at 14–30 (LGFFLVTFGFIWGMMLL) threads the bilayer. Over 31–741 (HFTIQQRTQP…GQVALCKDCL (711 aa)) the chain is Lumenal. N-linked (GlcNAc...) asparagine glycosylation is found at Asn110, Asn115, and Asn118. 9 disulfides stabilise this stretch: Cys145-Cys183, Cys156-Cys196, Cys172-Cys338, Cys372-Cys626, Cys649-Cys724, Cys653-Cys726, Cys660-Cys713, Cys681-Cys702, and Cys737-Cys740. The sufficient for catalytic activity stretch occupies residues 213–741 (NSLAEIRTDF…GQVALCKDCL (529 aa)). The important for activity in FGF2 release stretch occupies residues 264–269 (KRKRKK). Asn334 is a glycosylation site (N-linked (GlcNAc...) asparagine). A substrate-binding site is contributed by 378–379 (DS). 2 N-linked (GlcNAc...) asparagine glycosylation sites follow: Asn433 and Asn447. A UDP-N-acetyl-alpha-D-glucosamine-binding site is contributed by Glu526. Lys554 lines the substrate pocket.

It belongs to the glycosyltransferase 18 family. N-glycosylated. In terms of processing, a secreted form is released from the membrane after cleavage by gamma-secretase.

The protein resides in the golgi apparatus membrane. It localises to the secreted. It carries out the reaction N(4)-{beta-D-GlcNAc-(1-&gt;2)-[beta-D-GlcNAc-(1-&gt;4)]-alpha-D-Man-(1-&gt;3)-[beta-D-GlcNAc-(1-&gt;2)-alpha-D-Man-(1-&gt;6)]-beta-D-Man-(1-&gt;4)-beta-D-GlcNAc-(1-&gt;4)-beta-D-GlcNAc}-L-asparaginyl-[protein] + UDP-N-acetyl-alpha-D-glucosamine = N(4)-{beta-D-GlcNAc-(1-&gt;2)-[beta-D-GlcNAc-(1-&gt;4)]-alpha-D-Man-(1-&gt;3)-[beta-D-GlcNAc-(1-&gt;2)-[beta-D-GlcNAc-(1-&gt;6)]-alpha-D-Man-(1-&gt;6)]-beta-D-Man-(1-&gt;4)-beta-D-GlcNAc-(1-&gt;4)-beta-D-GlcNAc}-L-asparaginyl-[protein] + UDP + H(+). It functions in the pathway protein modification; protein glycosylation. Its activity is regulated as follows. Activity is increased by Mn(2+) and Mg(2+). In terms of biological role, catalyzes the addition of N-acetylglucosamine (GlcNAc) in beta 1-6 linkage to the alpha-linked mannose of biantennary N-linked oligosaccharides. Catalyzes an important step in the biosynthesis of branched, complex-type N-glycans, such as those found on EGFR, TGFR (TGF-beta receptor) and CDH2. Via its role in the biosynthesis of complex N-glycans, plays an important role in the activation of cellular signaling pathways, reorganization of the actin cytoskeleton, cell-cell adhesion and cell migration. MGAT5-dependent EGFR N-glycosylation enhances the interaction between EGFR and LGALS3 and thereby prevents rapid EGFR endocytosis and prolongs EGFR signaling. Required for efficient interaction between TGFB1 and its receptor. Enhances activation of intracellular signaling pathways by several types of growth factors, including FGF2, PDGF, IGF, TGFB1 and EGF. MGAT5-dependent CDH2 N-glycosylation inhibits CDH2-mediated homotypic cell-cell adhesion and contributes to the regulation of downstream signaling pathways. Promotes cell migration. Contributes to the regulation of the inflammatory response. MGAT5-dependent TCR N-glycosylation enhances the interaction between TCR and LGALS3, limits agonist-induced TCR clustering, and thereby dampens TCR-mediated responses to antigens. Required for normal leukocyte evasation and accumulation at sites of inflammation. Inhibits attachment of monocytes to the vascular endothelium and subsequent monocyte diapedesis. Promotes proliferation of umbilical vein endothelial cells and angiogenesis, at least in part by promoting the release of the growth factor FGF2 from the extracellular matrix. The sequence is that of Alpha-1,6-mannosylglycoprotein 6-beta-N-acetylglucosaminyltransferase A (MGAT5) from Homo sapiens (Human).